A 143-amino-acid polypeptide reads, in one-letter code: Large ribosomal subunit protein uL13c (143 aa).

This sequence belongs to the universal ribosomal protein uL13 family. As to quaternary structure, part of the 50S ribosomal subunit.

Its subcellular location is the plastid. The protein localises to the chloroplast. The sequence is that of Large ribosomal subunit protein uL13c from Gracilaria tenuistipitata var. liui (Red alga).